A 337-amino-acid chain; its full sequence is Quercetin 2,3-dioxygenase (337 aa).

Cupin type-2 domains are found at residues lysine 55–histidine 110 and proline 226–serine 281. Residues histidine 62, histidine 64, glutamate 69, histidine 103, histidine 234, histidine 236, glutamate 241, and histidine 275 each coordinate Fe cation.

Homodimer. Requires Fe(2+) as cofactor.

It carries out the reaction quercetin + O2 = 2-(3,4-dihydroxybenzoyloxy)-4,6-dihydroxybenzoate + CO. It participates in flavonoid metabolism; quercetin degradation. In terms of biological role, performs the first step in the degradation of the flavonoid quercetin by a dioxygenase reaction. The enzyme catalyzes the cleavage of the O-heteroaromatic ring of the flavonol quercetin yielding the depside 2-protocatechuoyl-phloroglucinol carboxylic acid and carbon monoxide. This involves the remarkable dioxygenolytic cleavage of two carbon-carbon bonds. The chain is Quercetin 2,3-dioxygenase (qdoI) from Bacillus subtilis (strain 168).